Reading from the N-terminus, the 430-residue chain is GTPase Obg (430 aa).

Positions 1–158 constitute an Obg domain; the sequence is MFIDTAKVFV…LNIVLELKLL (158 aa). In terms of domain architecture, OBG-type G spans 159–331; the sequence is ADVGLLGFPN…VMKEAARILK (173 aa). GTP-binding positions include 165–172, 190–194, 212–215, 282–285, and 312–314; these read GFPNVGKS, FTTLK, DIPG, NKSD, and SAA. Mg(2+)-binding residues include S172 and T192. The 86-residue stretch at 345–430 folds into the OCT domain; that stretch reads MYIPEEKRFT…LNDFEFEYIL (86 aa).

Belongs to the TRAFAC class OBG-HflX-like GTPase superfamily. OBG GTPase family. As to quaternary structure, monomer. The cofactor is Mg(2+).

It is found in the cytoplasm. In terms of biological role, an essential GTPase which binds GTP, GDP and possibly (p)ppGpp with moderate affinity, with high nucleotide exchange rates and a fairly low GTP hydrolysis rate. Plays a role in control of the cell cycle, stress response, ribosome biogenesis and in those bacteria that undergo differentiation, in morphogenesis control. The sequence is that of GTPase Obg from Clostridium beijerinckii (strain ATCC 51743 / NCIMB 8052) (Clostridium acetobutylicum).